We begin with the raw amino-acid sequence, 252 residues long: tRNA (guanine-N(7)-)-methyltransferase (252 aa).

S-adenosyl-L-methionine contacts are provided by Glu80, Glu105, Asp132, and Asp155. Residue Asp155 is part of the active site. Substrate is bound by residues Lys159, Asp191, and 231–234 (TKFE).

This sequence belongs to the class I-like SAM-binding methyltransferase superfamily. TrmB family.

The catalysed reaction is guanosine(46) in tRNA + S-adenosyl-L-methionine = N(7)-methylguanosine(46) in tRNA + S-adenosyl-L-homocysteine. It functions in the pathway tRNA modification; N(7)-methylguanine-tRNA biosynthesis. In terms of biological role, catalyzes the formation of N(7)-methylguanine at position 46 (m7G46) in tRNA. The polypeptide is tRNA (guanine-N(7)-)-methyltransferase (Actinobacillus succinogenes (strain ATCC 55618 / DSM 22257 / CCUG 43843 / 130Z)).